Reading from the N-terminus, the 206-residue chain is Probable GTP-binding protein EngB (206 aa).

One can recognise an EngB-type G domain in the interval 23–202 (HTAEVAFVGR…WGALLDTFGK (180 aa)). GTP-binding positions include 31-38 (GRSNVGKS), 58-62 (GRTRT), 83-86 (DLPG), 150-153 (TKVD), and 181-183 (FSS). 2 residues coordinate Mg(2+): S38 and T60.

Belongs to the TRAFAC class TrmE-Era-EngA-EngB-Septin-like GTPase superfamily. EngB GTPase family. Requires Mg(2+) as cofactor.

Its function is as follows. Necessary for normal cell division and for the maintenance of normal septation. In Myxococcus xanthus (strain DK1622), this protein is Probable GTP-binding protein EngB.